Consider the following 756-residue polypeptide: Hormone-sensitive lipase (756 aa).

An Involved in the stabilization of the negatively charged intermediate by the formation of the oxyanion hole motif is present at residues His350–Gly352. Ser424 is a catalytic residue. Disordered stretches follow at residues Ser542–Leu570 and Arg581–Gly600. At Ser552 the chain carries Phosphoserine; by PKA. Ser554 carries the phosphoserine; by AMPK modification. Residues Arg581–Ala596 show a composition bias toward polar residues. A phosphoserine mark is found at Ser595 and Ser649. Residues Asp692 and His722 contribute to the active site.

The protein belongs to the 'GDXG' lipolytic enzyme family. Monomer and homodimer. Interacts with CAVIN1 in the adipocyte cytoplasm. Interacts with PLIN5. Phosphorylation by AMPK reduces its translocation towards the lipid droplets.

The protein resides in the cell membrane. It is found in the membrane. It localises to the caveola. Its subcellular location is the cytoplasm. The protein localises to the cytosol. The protein resides in the lipid droplet. The catalysed reaction is a diacylglycerol + H2O = a monoacylglycerol + a fatty acid + H(+). It carries out the reaction a triacylglycerol + H2O = a diacylglycerol + a fatty acid + H(+). The enzyme catalyses a monoacylglycerol + H2O = glycerol + a fatty acid + H(+). It catalyses the reaction Hydrolyzes glycerol monoesters of long-chain fatty acids.. The catalysed reaction is 1,2-di-(9Z-octadecenoyl)-glycerol + (9Z)-octadecenoate + H(+) = 1,2,3-tri-(9Z-octadecenoyl)-glycerol + H2O. It carries out the reaction 2,3-di-(9Z)-octadecenoyl-sn-glycerol + H2O = 2-(9Z-octadecenoyl)-glycerol + (9Z)-octadecenoate + H(+). The enzyme catalyses cholesteryl (9Z-octadecenoate) + H2O = cholesterol + (9Z)-octadecenoate + H(+). It catalyses the reaction 1,2,3-tri-(9Z-octadecenoyl)-glycerol + H2O = di-(9Z)-octadecenoylglycerol + (9Z)-octadecenoate + H(+). The catalysed reaction is all-trans-retinyl hexadecanoate + H2O = all-trans-retinol + hexadecanoate + H(+). It carries out the reaction 1,2-di-(9Z-octadecenoyl)-glycerol + H2O = (9Z-octadecenoyl)-glycerol + (9Z)-octadecenoate + H(+). The enzyme catalyses 2-(5Z,8Z,11Z,14Z-eicosatetraenoyl)-glycerol + H2O = glycerol + (5Z,8Z,11Z,14Z)-eicosatetraenoate + H(+). It catalyses the reaction 1-(9Z-octadecenoyl)-glycerol + H2O = glycerol + (9Z)-octadecenoate + H(+). The catalysed reaction is 2-(9Z-octadecenoyl)-glycerol + H2O = glycerol + (9Z)-octadecenoate + H(+). It carries out the reaction 1-O-hexadecyl-2-acetyl-sn-glycerol + H2O = 1-O-hexadecyl-sn-glycerol + acetate + H(+). The enzyme catalyses 1,2-di-(9Z-octadecenoyl)-sn-glycerol + H2O = (9Z-octadecenoyl)-glycerol + (9Z)-octadecenoate + H(+). It catalyses the reaction 1,3-di-(9Z-octadecenoyl)-glycerol + H2O = 1-(9Z-octadecenoyl)-glycerol + (9Z)-octadecenoate + H(+). The catalysed reaction is 1,2-di-(9Z-octadecenoyl)-glycerol + H2O = 2-(9Z-octadecenoyl)-glycerol + (9Z)-octadecenoate + H(+). It participates in glycerolipid metabolism; triacylglycerol degradation. Its function is as follows. Lipase with broad substrate specificity, catalyzing the hydrolysis of triacylglycerols (TAGs), diacylglycerols (DAGs), monoacylglycerols (MAGs), cholesteryl esters and retinyl esters. Shows a preferential hydrolysis of DAGs over TAGs and MAGs. Preferentially hydrolyzes fatty acid (FA) esters at the sn-3 position of the glycerol backbone in DAGs and FA esters at the sn-1 and sn-2 positions of the glycerol backbone in TAGs. Catalyzes the hydrolysis of 2-arachidonoylglycerol, an endocannabinoid and of 2-acetyl monoalkylglycerol ether, the penultimate precursor of the pathway for de novo synthesis of platelet-activating factor. In adipose tissue and heart, it primarily hydrolyzes stored triglycerides to free fatty acids, while in steroidogenic tissues, it principally converts cholesteryl esters to free cholesterol for steroid hormone production. The protein is Hormone-sensitive lipase (LIPE) of Bos taurus (Bovine).